The primary structure comprises 341 residues: Glycerol-3-phosphate dehydrogenase [NAD(P)+] (341 aa).

Residues serine 14, phenylalanine 15, arginine 35, and lysine 108 each coordinate NADPH. Lysine 108 and glycine 136 together coordinate sn-glycerol 3-phosphate. Alanine 140 lines the NADPH pocket. Sn-glycerol 3-phosphate contacts are provided by lysine 191, aspartate 244, serine 254, arginine 255, and asparagine 256. Lysine 191 serves as the catalytic Proton acceptor. Residue arginine 255 coordinates NADPH. The NADPH site is built by valine 279 and glutamate 281.

The protein belongs to the NAD-dependent glycerol-3-phosphate dehydrogenase family.

The protein localises to the cytoplasm. The catalysed reaction is sn-glycerol 3-phosphate + NAD(+) = dihydroxyacetone phosphate + NADH + H(+). It carries out the reaction sn-glycerol 3-phosphate + NADP(+) = dihydroxyacetone phosphate + NADPH + H(+). It participates in membrane lipid metabolism; glycerophospholipid metabolism. Functionally, catalyzes the reduction of the glycolytic intermediate dihydroxyacetone phosphate (DHAP) to sn-glycerol 3-phosphate (G3P), the key precursor for phospholipid synthesis. The protein is Glycerol-3-phosphate dehydrogenase [NAD(P)+] of Pseudomonas savastanoi pv. phaseolicola (strain 1448A / Race 6) (Pseudomonas syringae pv. phaseolicola (strain 1448A / Race 6)).